The chain runs to 401 residues: Argininosuccinate synthase (401 aa).

Position 8–16 (8–16) interacts with ATP; the sequence is AYSGGLDTS. An L-citrulline-binding site is contributed by Tyr-87. Position 117 (Gly-117) interacts with ATP. Residues Thr-119, Asn-123, and Asp-124 each coordinate L-aspartate. Asn-123 contributes to the L-citrulline binding site. Residues Arg-127, Ser-175, Glu-259, and Tyr-271 each contribute to the L-citrulline site.

Belongs to the argininosuccinate synthase family. Type 1 subfamily. As to quaternary structure, homotetramer.

It localises to the cytoplasm. It catalyses the reaction L-citrulline + L-aspartate + ATP = 2-(N(omega)-L-arginino)succinate + AMP + diphosphate + H(+). The protein operates within amino-acid biosynthesis; L-arginine biosynthesis; L-arginine from L-ornithine and carbamoyl phosphate: step 2/3. This Pseudarthrobacter chlorophenolicus (strain ATCC 700700 / DSM 12829 / CIP 107037 / JCM 12360 / KCTC 9906 / NCIMB 13794 / A6) (Arthrobacter chlorophenolicus) protein is Argininosuccinate synthase.